The primary structure comprises 276 residues: Large ribosomal subunit protein uL2 (276 aa).

2 disordered regions span residues 36-55 and 219-276; these read PLPR…RHRG and TVRG…GRKK. Residues 255–276 show a composition bias toward basic residues; it reads LGKKTRKKKNRSNKLIVRGRKK.

Belongs to the universal ribosomal protein uL2 family. In terms of assembly, part of the 50S ribosomal subunit. Forms a bridge to the 30S subunit in the 70S ribosome.

In terms of biological role, one of the primary rRNA binding proteins. Required for association of the 30S and 50S subunits to form the 70S ribosome, for tRNA binding and peptide bond formation. It has been suggested to have peptidyltransferase activity; this is somewhat controversial. Makes several contacts with the 16S rRNA in the 70S ribosome. The sequence is that of Large ribosomal subunit protein uL2 from Macrococcus caseolyticus (strain JCSC5402) (Macrococcoides caseolyticum).